A 1345-amino-acid polypeptide reads, in one-letter code: DNA-directed RNA polymerase subunit beta' (1345 aa).

Positions 60, 62, 75, and 78 each coordinate Zn(2+). The Mg(2+) site is built by D536, D538, and D540. Positions 895, 974, 981, and 984 each coordinate Zn(2+).

This sequence belongs to the RNA polymerase beta' chain family. As to quaternary structure, the RNAP catalytic core consists of 2 alpha, 1 beta, 1 beta' and 1 omega subunit. When a sigma factor is associated with the core the holoenzyme is formed, which can initiate transcription. Mg(2+) serves as cofactor. Zn(2+) is required as a cofactor.

It catalyses the reaction RNA(n) + a ribonucleoside 5'-triphosphate = RNA(n+1) + diphosphate. In terms of biological role, DNA-dependent RNA polymerase catalyzes the transcription of DNA into RNA using the four ribonucleoside triphosphates as substrates. The protein is DNA-directed RNA polymerase subunit beta' of Bifidobacterium longum (strain DJO10A).